Here is a 149-residue protein sequence, read N- to C-terminus: Ribose-5-phosphate isomerase B (149 aa).

D-ribulose 5-phosphate is bound at residue 9–10 (DH). Residue Cys-66 is the Proton acceptor of the active site. 67–71 (GTGVG) provides a ligand contact to D-ribulose 5-phosphate. Residue His-99 is the Proton donor of the active site. D-ribulose 5-phosphate-binding residues include Asn-100, Arg-110, Arg-133, and Arg-137.

It belongs to the LacAB/RpiB family. Homodimer, and homotetramer.

It carries out the reaction aldehydo-D-ribose 5-phosphate = D-ribulose 5-phosphate. The enzyme catalyses D-allose 6-phosphate = D-allulose 6-phosphate. Its pathway is carbohydrate degradation; pentose phosphate pathway; D-ribose 5-phosphate from D-ribulose 5-phosphate (non-oxidative stage): step 1/1. With respect to regulation, inhibited by iodoacetate and glucose 6-phosphate. Catalyzes the interconversion of ribulose-5-P and ribose-5-P. It probably also has activity on D-allose 6-phosphate. The protein is Ribose-5-phosphate isomerase B of Escherichia coli (strain K12).